The following is a 593-amino-acid chain: Aspartate--tRNA ligase (593 aa).

An L-aspartate-binding site is contributed by Glu-173. Residues 197-200 (QLFK) are aspartate. Arg-219 provides a ligand contact to L-aspartate. ATP is bound by residues 219–221 (RDE) and Gln-228. His-449 serves as a coordination point for L-aspartate. ATP is bound at residue Glu-483. L-aspartate is bound at residue Arg-490. 535-538 (GLDR) is an ATP binding site.

It belongs to the class-II aminoacyl-tRNA synthetase family. Type 1 subfamily. In terms of assembly, homodimer.

The protein resides in the cytoplasm. It catalyses the reaction tRNA(Asp) + L-aspartate + ATP = L-aspartyl-tRNA(Asp) + AMP + diphosphate. In terms of biological role, catalyzes the attachment of L-aspartate to tRNA(Asp) in a two-step reaction: L-aspartate is first activated by ATP to form Asp-AMP and then transferred to the acceptor end of tRNA(Asp). The protein is Aspartate--tRNA ligase of Shewanella piezotolerans (strain WP3 / JCM 13877).